Reading from the N-terminus, the 187-residue chain is Orotate phosphoribosyltransferase (187 aa).

110 to 118 is a binding site for 5-phospho-alpha-D-ribose 1-diphosphate; that stretch reads EDVVTTGGS. The orotate site is built by T114 and R142.

It belongs to the purine/pyrimidine phosphoribosyltransferase family. PyrE subfamily. In terms of assembly, homodimer. Mg(2+) serves as cofactor.

The catalysed reaction is orotidine 5'-phosphate + diphosphate = orotate + 5-phospho-alpha-D-ribose 1-diphosphate. It participates in pyrimidine metabolism; UMP biosynthesis via de novo pathway; UMP from orotate: step 1/2. Catalyzes the transfer of a ribosyl phosphate group from 5-phosphoribose 1-diphosphate to orotate, leading to the formation of orotidine monophosphate (OMP). The protein is Orotate phosphoribosyltransferase of Thermotoga maritima (strain ATCC 43589 / DSM 3109 / JCM 10099 / NBRC 100826 / MSB8).